The primary structure comprises 655 residues: p-hydroxybenzoic acid efflux pump subunit AaeB (655 aa).

Helical transmembrane passes span 13–33 (FAVKLATAIVLALFVGFHFQL), 38–58 (WAVLTAAIVAAGPAFAAGGEP), 69–89 (LRIIGTFIGCIAGLVIIIAMI), 93–113 (LLMILVCCIWAGFCTWISSLV), 121–141 (WGLAGYTALIIVITIQPEPLL), 152–172 (EIVIGIVCAIMADLLFSPRSI), 370–390 (LFWLWTGWTSGSGAMVMIAVV), 407–427 (FIYGTLAALPLGLLYFLVIIP), 431–451 (QSMLLLCISLAVLGFFLGIEV), 459–479 (MGALASTINIIVLDNPMTFHF), and 482–502 (FLDSALGQIVGCVLAFTVILL).

The protein belongs to the aromatic acid exporter ArAE (TC 2.A.85) family.

Its subcellular location is the cell inner membrane. In terms of biological role, forms an efflux pump with AaeA. Could function as a metabolic relief valve, allowing to eliminate certain compounds when they accumulate to high levels in the cell. This Escherichia coli O7:K1 (strain IAI39 / ExPEC) protein is p-hydroxybenzoic acid efflux pump subunit AaeB.